Consider the following 296-residue polypeptide: Small ribosomal subunit protein uS2 (296 aa).

A disordered region spans residues 245–296 (WEAPAAGFAGATGTGWDGAAGDEWGAAPATTEWAASAAPAAASGEAAKETTW). Positions 263-289 (AAGDEWGAAPATTEWAASAAPAAASGE) are enriched in low complexity.

The protein belongs to the universal ribosomal protein uS2 family. Component of the small ribosomal subunit. Mature ribosomes consist of a small (40S) and a large (60S) subunit. The 40S subunit contains about 33 different proteins and 1 molecule of RNA (18S). The 60S subunit contains about 49 different proteins and 3 molecules of RNA (25S, 5.8S and 5S). Interacts with RPS21.

It localises to the cytoplasm. In terms of biological role, required for the assembly and/or stability of the 40S ribosomal subunit. Required for the processing of the 20S rRNA-precursor to mature 18S rRNA in a late step of the maturation of 40S ribosomal subunits. This Fusarium vanettenii (strain ATCC MYA-4622 / CBS 123669 / FGSC 9596 / NRRL 45880 / 77-13-4) (Fusarium solani subsp. pisi) protein is Small ribosomal subunit protein uS2.